The primary structure comprises 224 residues: Germin-like protein 8-5 (224 aa).

The signal sequence occupies residues 1-22 (MASPSSLCLLAALALISWQAMA). A disulfide bridge links cysteine 32 with cysteine 47. Residues 62–212 (AKLDTPRKTN…AFQVEKGTID (151 aa)) form the Cupin type-1 domain. Asparagine 76 carries N-linked (GlcNAc...) asparagine glycosylation. Mn(2+) is bound by residues histidine 109, histidine 111, and glutamate 116. The N-linked (GlcNAc...) asparagine glycan is linked to asparagine 135. Histidine 157 serves as a coordination point for Mn(2+).

The protein belongs to the germin family. As to quaternary structure, oligomer (believed to be a pentamer but probably hexamer).

The protein localises to the secreted. Its subcellular location is the extracellular space. The protein resides in the apoplast. Functionally, plays a role in broad-spectrum disease resistance. Probably has no oxalate oxidase activity even if the active site is conserved. In Oryza sativa subsp. japonica (Rice), this protein is Germin-like protein 8-5.